A 195-amino-acid polypeptide reads, in one-letter code: CASP-like protein 1B1 (195 aa).

Topologically, residues 1-25 (MDLEKGKKPSEQAAACRIMQVKDKL) are cytoplasmic. A helical membrane pass occupies residues 26–46 (ITLQPVVRACVFLATAVAAVI). Residues 47–78 (MGLNKQSYTTVVAIVGTRPVTQTFTAKFKDTP) are Extracellular-facing. Residues 79–99 (AFVFFVIANAIASGYNLMVLV) traverse the membrane as a helical segment. Topologically, residues 100–114 (TRRILQRRAQSLSVH) are cytoplasmic. Residues 115–135 (LLDMVILTLLATGSATAASMA) form a helical membrane-spanning segment. The Extracellular portion of the chain corresponds to 136–160 (QLGKNGNLHARWNPICDKFGSFCNH). Residues 161–181 (GGIALMSSFIGVALMLALNLL) form a helical membrane-spanning segment. Residues 182–195 (SAAANSPRSNVTGQ) lie on the Cytoplasmic side of the membrane.

The protein belongs to the Casparian strip membrane proteins (CASP) family. Homodimer and heterodimers.

It is found in the cell membrane. The chain is CASP-like protein 1B1 from Oryza sativa subsp. indica (Rice).